A 780-amino-acid polypeptide reads, in one-letter code: Phosphoenolpyruvate synthase (780 aa).

The active-site Tele-phosphohistidine intermediate is histidine 409. Substrate contacts are provided by arginine 499, arginine 566, glutamate 668, glycine 689, serine 690, asparagine 691, and aspartate 692. Mg(2+) is bound at residue glutamate 668. Aspartate 692 contributes to the Mg(2+) binding site.

It belongs to the PEP-utilizing enzyme family. The cofactor is Mg(2+).

It catalyses the reaction pyruvate + ATP + H2O = phosphoenolpyruvate + AMP + phosphate + 2 H(+). It functions in the pathway carbohydrate biosynthesis; gluconeogenesis. Functionally, catalyzes the phosphorylation of pyruvate to phosphoenolpyruvate. This is Phosphoenolpyruvate synthase (ppsA) from Deinococcus radiodurans (strain ATCC 13939 / DSM 20539 / JCM 16871 / CCUG 27074 / LMG 4051 / NBRC 15346 / NCIMB 9279 / VKM B-1422 / R1).